The primary structure comprises 630 residues: Probable potassium transport system protein Kup (630 aa).

12 helical membrane-spanning segments follow: residues 17–37, 51–71, 105–125, 144–164, 175–195, 218–238, 255–275, 283–303, 344–364, 374–394, 402–422, and 428–448; these read LAIAAIGVVFGDIGTSPLYSL, PSAILGVISLLFWAIILVVGI, ITGLMMALGIFGACMFYGDAV, PQLSHLVLPITIVILIALFWI, LFGPIMVLWFVTIAVLGIYHI, VLLAYVVLGSVVLVLTGAEAL, YVLVMPSLVLNYFGQGALLLL, PFFLLAPQWAALPLVVLSTVA, IYVPVVNWLLLFVILCIVIGF, YGIAVTATMVITTILAAVVMV, LLVAMIIGVFLVIDLGFFGAN, and QGGWLPLGIGALLFFLLMTWY.

This sequence belongs to the HAK/KUP transporter (TC 2.A.72) family.

The protein localises to the cell inner membrane. It catalyses the reaction K(+)(in) + H(+)(in) = K(+)(out) + H(+)(out). Its function is as follows. Transport of potassium into the cell. Likely operates as a K(+):H(+) symporter. This Burkholderia pseudomallei (strain K96243) protein is Probable potassium transport system protein Kup.